Here is a 196-residue protein sequence, read N- to C-terminus: Beta-crystallin A2 (196 aa).

The N-terminal arm stretch occupies residues 1–11 (MTSEAMDTLGQ). Beta/gamma crystallin 'Greek key' domains lie at 12–51 (YKITVWEEESFQGKRCEFLMECPSIMERGFRKIRSIKVES) and 52–98 (GPWV…RPVK). A connecting peptide region spans residues 99–104 (CANHND). Beta/gamma crystallin 'Greek key' domains follow at residues 105–146 (SKAI…KVNA) and 147–195 (GAWV…RRIQ).

The protein belongs to the beta/gamma-crystallin family. In terms of assembly, homo/heterodimer, or complexes of higher-order. The structure of beta-crystallin oligomers seems to be stabilized through interactions between the N-terminal arms.

Crystallins are the dominant structural components of the vertebrate eye lens. The protein is Beta-crystallin A2 (CRYBA2) of Gallus gallus (Chicken).